The chain runs to 607 residues: COMPASS component cclA (607 aa).

Low complexity predominate over residues methionine 1–proline 19. Disordered stretches follow at residues methionine 1–histidine 22 and glycine 34–alanine 86. Residues serine 57–glutamate 69 show a composition bias toward basic residues. Residues isoleucine 157–alanine 376 form the B30.2/SPRY domain. The tract at residues asparagine 587–glycine 607 is disordered.

The protein belongs to the cclA family. As to quaternary structure, component of the COMPASS complex.

It localises to the nucleus. The protein resides in the chromosome. The protein localises to the telomere. Functionally, component of the COMPASS (Set1C) complex that specifically mono-, di- and trimethylates histone H3 to form H3K4me1/2/3, which subsequently plays a role in telomere length maintenance and transcription elongation regulation. Controls the production of several secondary metabolites, including monodictyphenone, emodin and emodin derivatives, as well as two anti-osteoporosis polyketides, F9775A and F9775B. This Emericella nidulans (strain FGSC A4 / ATCC 38163 / CBS 112.46 / NRRL 194 / M139) (Aspergillus nidulans) protein is COMPASS component cclA.